A 187-amino-acid chain; its full sequence is Elongation factor P (187 aa).

Belongs to the elongation factor P family.

The protein resides in the cytoplasm. The protein operates within protein biosynthesis; polypeptide chain elongation. In terms of biological role, involved in peptide bond synthesis. Stimulates efficient translation and peptide-bond synthesis on native or reconstituted 70S ribosomes in vitro. Probably functions indirectly by altering the affinity of the ribosome for aminoacyl-tRNA, thus increasing their reactivity as acceptors for peptidyl transferase. This chain is Elongation factor P, found in Nocardia farcinica (strain IFM 10152).